The sequence spans 424 residues: MRRVLRLLLGCFLTELCARVCRAQERAGHGQLAQLGGVLLLAGGNRSGAASGEASEGAEASDAPPTRAPTPDFCRGYFDVMGQWDPPFNCSSGDFIFCCGTCGFRFCCTFKKRRLNQSTCTNYDTPLWLNTGKPPARKDDPLHDPTKDKTNLIVYIICGVVAVMVLVGIFTKLGLEKAHRPQREHMSRALADVMRPQGHCNTDHMERDLNIVVHVQHYENMDTRTPINNLHATQMNNAVPTSPLLQQMGHPHSYPNLGQISNPYEQQPPGKELNKYASLKAVGSSDGDWAVSTLKSPKADKVNDDFYTKRRHLAELAAKGNLPLHPVRVEDEPRAFSPEHGPAKQNGQKSRTNKMPPHPLAYTSTTNFKGWDPNEQSLRRQAYSNKGKLGTAETGSSDPLGTRPQHYPPPQPYFITNSKTEVTV.

The signal sequence occupies residues 1–23 (MRRVLRLLLGCFLTELCARVCRA). The Extracellular portion of the chain corresponds to 24 to 149 (QERAGHGQLA…DPLHDPTKDK (126 aa)). N-linked (GlcNAc...) asparagine glycosylation is found at Asn-45, Asn-89, and Asn-116. A helical transmembrane segment spans residues 150–170 (TNLIVYIICGVVAVMVLVGIF). Over 171–424 (TKLGLEKAHR…ITNSKTEVTV (254 aa)) the chain is Cytoplasmic. The segment at 333–424 (PRAFSPEHGP…ITNSKTEVTV (92 aa)) is disordered. The span at 414-424 (FITNSKTEVTV) shows a compositional bias: polar residues.

It belongs to the shisa family. SHISA9 subfamily. Component of some AMPA receptors (ionotropic glutamate receptors) complex, at least composed of some AMPA receptor (GRIA1, GRIA2 and/or GRIA3), CACNG2 and SHISA9, as well as low level of DLG4.

The protein localises to the cell projection. It is found in the dendritic spine membrane. Its subcellular location is the synapse. Functionally, regulator of short-term neuronal synaptic plasticity in the dentate gyrus. Associates with AMPA receptors (ionotropic glutamate receptors) in synaptic spines and promotes AMPA receptor desensitization at excitatory synapses. This chain is Protein shisa-9 (SHISA9), found in Homo sapiens (Human).